We begin with the raw amino-acid sequence, 380 residues long: UDP-N-acetylglucosamine 2-epimerase (380 aa).

It belongs to the UDP-N-acetylglucosamine 2-epimerase family.

The protein resides in the cytoplasm. It catalyses the reaction UDP-N-acetyl-alpha-D-glucosamine = UDP-N-acetyl-alpha-D-mannosamine. The protein operates within cell wall biogenesis; poly(glycerol phosphate) teichoic acid biosynthesis. Its function is as follows. Catalyzes the conversion of UDP-N-acetylglucosamine into UDP-N-acetylmannosamine, a precursor of the teichoic acid linkage unit. The polypeptide is UDP-N-acetylglucosamine 2-epimerase (mnaA) (Bacillus subtilis (strain 168)).